A 450-amino-acid polypeptide reads, in one-letter code: MKTALVILAAGKGTRMNSDLPKVLHPLAGAPLLIHAMQSGASLGPSRTVIVAGHGAELVQKAALSHDASAIIVQQTEQLGTGHAAKQAQDALKGFDGTVVVLFGDTPFVSPDTLSAICDAQRSADVVVLGFEAADPARYGRLVMDGAQLDRIVEYKDATEAERAITLCNSGVVACNGTRLFELLEAVDNDNAAGEFYLPDIVGVARARGLTAAVVTCDESETLGINSRTELSAAEAAFQERARTNAFENGVTLPAPGTVHFAFDTVVGRDTLIEPNVVFGPGVTIESGATIRAFSHLEGCHVARGSVVGPYARLRPGAELSENVRVGNFVEVKNARIGTGTKINHLSYIGDATLGEYTNVGAGTITCNYDGVLKHHTEIGNHVFIGSNTMLVAPVQIGDHAMTGSGSVITSDVEPEALALSRAPQIEKPGMATKIINLLRAKKAKQQRGS.

The tract at residues 1–228 is pyrophosphorylase; sequence MKTALVILAA…ESETLGINSR (228 aa). UDP-N-acetyl-alpha-D-glucosamine-binding positions include 8–11, lysine 22, glutamine 75, and 80–81; these read LAAG and GT. Mg(2+) is bound at residue aspartate 105. UDP-N-acetyl-alpha-D-glucosamine-binding residues include glycine 140, glutamate 154, asparagine 169, and asparagine 226. Asparagine 226 contributes to the Mg(2+) binding site. The tract at residues 229–249 is linker; that stretch reads TELSAAEAAFQERARTNAFEN. Residues 250 to 450 form an N-acetyltransferase region; sequence GVTLPAPGTV…AKKAKQQRGS (201 aa). The UDP-N-acetyl-alpha-D-glucosamine site is built by arginine 315 and lysine 333. Histidine 345 functions as the Proton acceptor in the catalytic mechanism. Residues tyrosine 348 and asparagine 359 each contribute to the UDP-N-acetyl-alpha-D-glucosamine site. Acetyl-CoA is bound by residues alanine 362, 368-369, serine 387, serine 405, and arginine 422; that span reads NY.

In the N-terminal section; belongs to the N-acetylglucosamine-1-phosphate uridyltransferase family. It in the C-terminal section; belongs to the transferase hexapeptide repeat family. Homotrimer. Mg(2+) serves as cofactor.

It is found in the cytoplasm. The catalysed reaction is alpha-D-glucosamine 1-phosphate + acetyl-CoA = N-acetyl-alpha-D-glucosamine 1-phosphate + CoA + H(+). The enzyme catalyses N-acetyl-alpha-D-glucosamine 1-phosphate + UTP + H(+) = UDP-N-acetyl-alpha-D-glucosamine + diphosphate. Its pathway is nucleotide-sugar biosynthesis; UDP-N-acetyl-alpha-D-glucosamine biosynthesis; N-acetyl-alpha-D-glucosamine 1-phosphate from alpha-D-glucosamine 6-phosphate (route II): step 2/2. It participates in nucleotide-sugar biosynthesis; UDP-N-acetyl-alpha-D-glucosamine biosynthesis; UDP-N-acetyl-alpha-D-glucosamine from N-acetyl-alpha-D-glucosamine 1-phosphate: step 1/1. It functions in the pathway bacterial outer membrane biogenesis; LPS lipid A biosynthesis. Functionally, catalyzes the last two sequential reactions in the de novo biosynthetic pathway for UDP-N-acetylglucosamine (UDP-GlcNAc). The C-terminal domain catalyzes the transfer of acetyl group from acetyl coenzyme A to glucosamine-1-phosphate (GlcN-1-P) to produce N-acetylglucosamine-1-phosphate (GlcNAc-1-P), which is converted into UDP-GlcNAc by the transfer of uridine 5-monophosphate (from uridine 5-triphosphate), a reaction catalyzed by the N-terminal domain. The protein is Bifunctional protein GlmU of Roseobacter denitrificans (strain ATCC 33942 / OCh 114) (Erythrobacter sp. (strain OCh 114)).